The primary structure comprises 198 residues: Ras-related protein Rab-34, isoform NARR (198 aa).

Repeat copies occupy residues 7–15, 16–24, 25–33, 34–42, 43–51, 52–60, 61–69, 70–78, 79–87, 88–96, 97–105, 106–114, and 115–123. Residues 7–125 are 13 x 9 AA approximate tandem-repeats of P-R-V-I-V-G-(S/T)-P-R; the sequence is PRDDVGSPRP…RPRVIVGSPR (119 aa). Ser13 is subject to Phosphoserine. Positions 37-64 are disordered; the sequence is IVGSARARPPPDGTPRPQLAAEESPRPR. Position 69 is a phosphothreonine (Thr69). Ser78, Ser87, and Ser96 each carry phosphoserine. A compositionally biased stretch (low complexity) spans 94–121; the sequence is VASPRPRTPVGSPWPRVVVGTPRPRVIV. The tract at residues 94–198 is disordered; it reads VASPRPRTPV…GAPDRHRGQI (105 aa). A Phosphoserine modification is found at Ser123. Positions 145–157 are enriched in basic and acidic residues; the sequence is RRQDEHSGTRAEG. The segment covering 161–178 has biased composition (low complexity); sequence GGAAPVPEEGGRFARAQR.

In terms of assembly, may interact with EIF5A and ERF1. Post-translationally, phosphorylated during M-phase.

Its subcellular location is the nucleus. The protein localises to the nucleolus. The chain is Ras-related protein Rab-34, isoform NARR (RAB34) from Homo sapiens (Human).